Consider the following 264-residue polypeptide: Apolipoprotein A-I (264 aa).

Positions 1-18 (MRGVLVTLAVLFLTGTQA) are cleaved as a signal peptide. 2 repeat units span residues 67–88 (LKLA…EDMA) and 89–110 (PYYK…AELT). A 10 X approximate tandem repeats region spans residues 67–264 (LKLADNLDTL…FLDELQKSVA (198 aa)). A 3; half-length repeat occupies 111–121 (KDLEEVKEKIR). A run of 5 repeats spans residues 122–143 (PFLD…QRLT), 144–165 (PVAQ…AKLT), 166–187 (PVAE…KNLA), 188–209 (PYSD…EKGI), and 210–231 (PQAS…EKMT). One copy of the 9; half-length repeat lies at 232–242 (PLVQEFRERLT). The stretch at 243 to 264 (PYAENLKNRLISFLDELQKSVA) is repeat 10.

The protein belongs to the apolipoprotein A1/A4/E family. In terms of assembly, homodimer. As to expression, major protein of plasma HDL, also found in chylomicrons.

The protein localises to the secreted. Functionally, participates in the reverse transport of cholesterol from tissues to the liver for excretion by promoting cholesterol efflux from tissues and by acting as a cofactor for the lecithin cholesterol acyltransferase (LCAT). The chain is Apolipoprotein A-I (APOA1) from Gallus gallus (Chicken).